The following is a 689-amino-acid chain: Glycine--tRNA ligase beta subunit (689 aa).

It belongs to the class-II aminoacyl-tRNA synthetase family. Tetramer of two alpha and two beta subunits.

The protein localises to the cytoplasm. It catalyses the reaction tRNA(Gly) + glycine + ATP = glycyl-tRNA(Gly) + AMP + diphosphate. The sequence is that of Glycine--tRNA ligase beta subunit from Salmonella dublin (strain CT_02021853).